The primary structure comprises 43 residues: Methionine aminopeptidase (43 aa).

It belongs to the peptidase M24A family. Methionine aminopeptidase type 1 subfamily. In terms of assembly, monomer. It depends on Co(2+) as a cofactor. The cofactor is Zn(2+). Requires Mn(2+) as cofactor. Fe(2+) is required as a cofactor.

It catalyses the reaction Release of N-terminal amino acids, preferentially methionine, from peptides and arylamides.. Removes the N-terminal methionine from nascent proteins. The N-terminal methionine is often cleaved when the second residue in the primary sequence is small and uncharged (Met-Ala-, Cys, Gly, Pro, Ser, Thr, or Val). Requires deformylation of the N(alpha)-formylated initiator methionine before it can be hydrolyzed. The protein is Methionine aminopeptidase (map) of Klebsiella oxytoca.